The primary structure comprises 196 residues: Agamous-like MADS-box protein AGL31 (196 aa).

The region spanning 1–61 (MGRKKVEIKR…GKLYKSASGD (61 aa)) is the MADS-box domain. Positions 80-170 (ALDLAEKTRN…ASQVGKKTFL (91 aa)) constitute a K-box domain.

In terms of tissue distribution, expressed in most plant tissues, roots, seedlings, leaves, stems, inflorescences, pollen, siliques and flowers.

It localises to the nucleus. Its function is as follows. Probable transcription factor that prevents vernalization by short periods of cold. Acts as a floral repressor. This chain is Agamous-like MADS-box protein AGL31 (AGL31), found in Arabidopsis thaliana (Mouse-ear cress).